The sequence spans 366 residues: Acetylserotonin O-methyltransferase 2 (366 aa).

Residues Gly-209, Asp-232, Asp-253, and Lys-267 each coordinate S-adenosyl-L-homocysteine. His-271 functions as the Proton acceptor in the catalytic mechanism. Catalysis depends on residues Glu-302 and Glu-332.

This sequence belongs to the class I-like SAM-binding methyltransferase superfamily. Cation-independent O-methyltransferase family. Homodimer. Expressed in roots, leaves, stems and flowers.

It localises to the cytoplasm. The catalysed reaction is N-acetylserotonin + S-adenosyl-L-methionine = melatonin + S-adenosyl-L-homocysteine + H(+). It functions in the pathway aromatic compound metabolism; melatonin biosynthesis; melatonin from serotonin: step 1/2. Its function is as follows. Methyltransferase which catalyzes the transfer of a methyl group onto N-acetylserotonin, producing melatonin (N-acetyl-5-methoxytryptamine). This is Acetylserotonin O-methyltransferase 2 from Oryza sativa subsp. japonica (Rice).